The chain runs to 31 residues: Cyclotide cter-C (31 aa).

A cross-link (cyclopeptide (Gly-Asp)) is located at residues 1–31 (GVPCAESCVWIPCTVTALLGCSCKDKVCYLD). Intrachain disulfides connect cysteine 4–cysteine 21, cysteine 8–cysteine 23, and cysteine 13–cysteine 28.

Contains 3 disulfide bonds. Post-translationally, this is a cyclic peptide.

Its function is as follows. Probably participates in a plant defense mechanism. In Clitoria ternatea (Butterfly pea), this protein is Cyclotide cter-C.